The sequence spans 862 residues: C-type lectin domain-containing protein 161 (862 aa).

The first 20 residues, 1 to 20 (MYRRTTLWFLLLFQPILVFA), serve as a signal peptide directing secretion. N-linked (GlcNAc...) asparagine glycosylation is found at N22 and N91. The C-type lectin 1 domain occupies 41–154 (SLNACFKLYN…VGQKLPFVCT (114 aa)). A disulfide bridge links C62 with C153. The tract at residues 162-291 (AGPAPVHAMR…SDESSDEAYD (130 aa)) is disordered. Basic and acidic residues predominate over residues 198 to 218 (SDKKEKKEVASDKKKESKKDE). N222 carries an N-linked (GlcNAc...) asparagine glycan. Residues 242–252 (SDKKESSKKDE) are compositionally biased toward basic and acidic residues. 3 N-linked (GlcNAc...) asparagine glycosylation sites follow: N258, N279, and N352. Residues 265-283 (ANAEMSASISASSANSSSD) are compositionally biased toward low complexity. 3 disordered regions span residues 377-437 (MTMR…SASL), 450-469 (ALASKSKSDSSDQSKDQKSA), and 474-504 (AVVSENKHPTKKPEDPKSTKTTTEEPDIDES). A compositionally biased stretch (low complexity) spans 388-418 (SSSNTDSESASISESSQASEQAVMAAAMSAK). Composition is skewed to basic and acidic residues over residues 455–467 (SKSDSSDQSKDQK) and 478–491 (ENKHPTKKPEDPKS). N559 carries an N-linked (GlcNAc...) asparagine glycan. 2 consecutive C-type lectin domains span residues 562–687 (APAL…SVLC) and 716–828 (KNGK…FVSV). Residues C653 and C678 are joined by a disulfide bond. An N-linked (GlcNAc...) asparagine glycan is attached at N765. C807 and C819 are disulfide-bonded. Residues N831 and N857 are each glycosylated (N-linked (GlcNAc...) asparagine).

It is found in the secreted. The polypeptide is C-type lectin domain-containing protein 161 (clec-161) (Caenorhabditis elegans).